The following is a 629-amino-acid chain: MPSTRNIEKHNDSNPTLRALSLSALGIVYGDIGTSPLYTFKTVILLAGGGTPDVTTIMGSASLIIWTLIIIASVKYICFALRIDNDGEGGILALMSLLSLKLKQKPFIIAVGLMGAALIYGDGTITPAISVLSAVEGLEILSPSLKYYVLPIAITILITLFAIQSKGTTTIGKAFGPVMAFWFLTIGILGARGVIQHPFVLAAINPVYGLNFLFSNGATGFFILCGVFLCATGAEALYADLGHFGTAPIRCTWFGLAFPSLIFNYLGQAALVLEGASTEHNIFYMLCPSDFLLPLIILSTVATIIASQAIITGAFSMTRQAMQLGWLPRLRVTQTSSEGYGQIYIGVVNWLLMLATLGLIIGFGSSEKLAAAYGIAVSATMLCTTVLLFIALHKLWKWNIITSGLVAGLFMIVDASFFAANLTKFINGGYIPITLAIIIYSMMYIWHKGYKTIAIKQKEKNITVDSFLDSIQKEGVVRVSKTAVFLTSKEQDIPPTLVWHVKKNHVLQDKVIILNINNLSIPWCKPGDQLQIVETGAGIWHAVANYGFMEQPHIPKLLKKLEAQGYDINIKDITYYIGHETIFVRNARHTLSKYIKILFVFMHRNALPMSNYFHLPPESVFEIGRQIEI.

Helical transmembrane passes span 20–40, 54–74, 106–126, 143–163, 171–191, 212–232, 253–273, 291–311, 343–363, 372–392, 400–420, and 425–445; these read LSLSALGIVYGDIGTSPLYTF, VTTIMGSASLIIWTLIIIASV, PFIIAVGLMGAALIYGDGTIT, PSLKYYVLPIAITILITLFAI, IGKAFGPVMAFWFLTIGILGA, FLFSNGATGFFILCGVFLCAT, WFGLAFPSLIFNYLGQAALVL, FLLPLIILSTVATIIASQAII, IYIGVVNWLLMLATLGLIIGF, AYGIAVSATMLCTTVLLFIAL, IITSGLVAGLFMIVDASFFAA, and FINGGYIPITLAIIIYSMMYI.

This sequence belongs to the HAK/KUP transporter (TC 2.A.72) family.

It is found in the cell inner membrane. The catalysed reaction is K(+)(in) + H(+)(in) = K(+)(out) + H(+)(out). In terms of biological role, transport of potassium into the cell. Likely operates as a K(+):H(+) symporter. This Legionella pneumophila (strain Paris) protein is Probable potassium transport system protein Kup 3.